A 336-amino-acid polypeptide reads, in one-letter code: Cytosolic Fe-S cluster assembly factor NBP35 (336 aa).

The interval 1 to 20 (MIATQRPFPIPSPVPLAPSS) is disordered. [4Fe-4S] cluster is bound by residues Cys35, Cys49, Cys52, and Cys58. 88 to 95 (GKGGVGKS) is an ATP binding site. Residues Cys261 and Cys264 each coordinate [4Fe-4S] cluster.

This sequence belongs to the Mrp/NBP35 ATP-binding proteins family. NUBP1/NBP35 subfamily. Heterotetramer of 2 NBP35 and 2 CFD1 chains. Requires [4Fe-4S] cluster as cofactor.

Its subcellular location is the cytoplasm. Functionally, component of the cytosolic iron-sulfur (Fe/S) protein assembly (CIA) machinery. Required for maturation of extramitochondrial Fe-S proteins. The NBP35-CFD1 heterotetramer forms a Fe-S scaffold complex, mediating the de novo assembly of an Fe-S cluster and its transfer to target apoproteins. This Cryptococcus neoformans var. neoformans serotype D (strain B-3501A) (Filobasidiella neoformans) protein is Cytosolic Fe-S cluster assembly factor NBP35.